Consider the following 153-residue polypeptide: Prophage Rz endopeptidase RzpD (153 aa).

Necessary for host cell lysis. It is believed to code for an endopeptidase that cleaves the amino-carboxyl cross-link between the diaminopimelic acid and D-alanine residues in the murein component of the bacterial cell wall. The polypeptide is Prophage Rz endopeptidase RzpD (rzpD) (Escherichia coli (strain K12)).